The following is a 127-amino-acid chain: Glycine cleavage system H protein (127 aa).

The Lipoyl-binding domain occupies 22 to 104 (EAVIGITQFA…YTDGWMVRVK (83 aa)). Residue Lys63 is modified to N6-lipoyllysine.

Belongs to the GcvH family. As to quaternary structure, the glycine cleavage system is composed of four proteins: P, T, L and H. (R)-lipoate serves as cofactor.

The glycine cleavage system catalyzes the degradation of glycine. The H protein shuttles the methylamine group of glycine from the P protein to the T protein. The protein is Glycine cleavage system H protein of Nitratidesulfovibrio vulgaris (strain DSM 19637 / Miyazaki F) (Desulfovibrio vulgaris).